The primary structure comprises 101 residues: Small ribosomal subunit protein uS10 (101 aa).

Belongs to the universal ribosomal protein uS10 family. As to quaternary structure, part of the 30S ribosomal subunit.

Functionally, involved in the binding of tRNA to the ribosomes. This Christiangramia forsetii (strain DSM 17595 / CGMCC 1.15422 / KT0803) (Gramella forsetii) protein is Small ribosomal subunit protein uS10.